The following is a 363-amino-acid chain: UDP-3-O-acylglucosamine N-acyltransferase (363 aa).

The Proton acceptor role is filled by histidine 252.

It belongs to the transferase hexapeptide repeat family. LpxD subfamily. In terms of assembly, homotrimer.

It catalyses the reaction a UDP-3-O-[(3R)-3-hydroxyacyl]-alpha-D-glucosamine + a (3R)-hydroxyacyl-[ACP] = a UDP-2-N,3-O-bis[(3R)-3-hydroxyacyl]-alpha-D-glucosamine + holo-[ACP] + H(+). Its pathway is bacterial outer membrane biogenesis; LPS lipid A biosynthesis. Catalyzes the N-acylation of UDP-3-O-acylglucosamine using 3-hydroxyacyl-ACP as the acyl donor. Is involved in the biosynthesis of lipid A, a phosphorylated glycolipid that anchors the lipopolysaccharide to the outer membrane of the cell. This chain is UDP-3-O-acylglucosamine N-acyltransferase, found in Cupriavidus necator (strain ATCC 17699 / DSM 428 / KCTC 22496 / NCIMB 10442 / H16 / Stanier 337) (Ralstonia eutropha).